The sequence spans 95 residues: MRTLALLAAILLVTLQAQAELHSGMADDGVDQQQPRAQDLDVAVYIKQDETSPLEVLGAKAGVSCTCRRFSCGFGERASGSCTVNGVRHTLCCRR.

The N-terminal stretch at 1-19 is a signal peptide; the sequence is MRTLALLAAILLVTLQAQA. Positions 20 to 62 are excised as a propeptide; that stretch reads ELHSGMADDGVDQQQPRAQDLDVAVYIKQDETSPLEVLGAKAG. Disulfide bonds link C65–C93, C67–C82, and C72–C92.

This sequence belongs to the alpha-defensin family.

The protein localises to the secreted. In terms of biological role, microbicidal activity. In Oryctolagus cuniculus (Rabbit), this protein is Neutrophil antibiotic peptide NP-4.